The chain runs to 126 residues: Holo-[acyl-carrier-protein] synthase (126 aa).

Mg(2+) contacts are provided by Asp9 and Glu58.

Belongs to the P-Pant transferase superfamily. AcpS family. Mg(2+) is required as a cofactor.

Its subcellular location is the cytoplasm. It catalyses the reaction apo-[ACP] + CoA = holo-[ACP] + adenosine 3',5'-bisphosphate + H(+). Its function is as follows. Transfers the 4'-phosphopantetheine moiety from coenzyme A to a Ser of acyl-carrier-protein. The protein is Holo-[acyl-carrier-protein] synthase of Cronobacter sakazakii (strain ATCC BAA-894) (Enterobacter sakazakii).